A 348-amino-acid polypeptide reads, in one-letter code: 3-isopropylmalate dehydrogenase (348 aa).

Residue Gly76–Glu87 participates in NAD(+) binding. Substrate contacts are provided by Arg94, Arg104, Arg132, and Asp217. The Mg(2+) site is built by Asp217, Asp241, and Asp245. Gly275–Asn287 contributes to the NAD(+) binding site.

The protein belongs to the isocitrate and isopropylmalate dehydrogenases family. LeuB type 1 subfamily. In terms of assembly, homodimer. It depends on Mg(2+) as a cofactor. The cofactor is Mn(2+).

Its subcellular location is the cytoplasm. The catalysed reaction is (2R,3S)-3-isopropylmalate + NAD(+) = 4-methyl-2-oxopentanoate + CO2 + NADH. The protein operates within amino-acid biosynthesis; L-leucine biosynthesis; L-leucine from 3-methyl-2-oxobutanoate: step 3/4. In terms of biological role, catalyzes the oxidation of 3-carboxy-2-hydroxy-4-methylpentanoate (3-isopropylmalate) to 3-carboxy-4-methyl-2-oxopentanoate. The product decarboxylates to 4-methyl-2 oxopentanoate. The sequence is that of 3-isopropylmalate dehydrogenase from Staphylococcus aureus (strain bovine RF122 / ET3-1).